Here is a 185-residue protein sequence, read N- to C-terminus: Heavy metal-associated isoprenylated plant protein 11 (185 aa).

An HMA domain is found at 39–106 (QQNTNVVFKL…ICKHVAIIAA (68 aa)). Over residues 109–158 (IREPEQNRNPVTRREPNREPEQNRSRVTRREPSREPEPNRAPLARRESRP) the composition is skewed to basic and acidic residues. The segment at 109-185 (IREPEQNRNP…GENSDGCIIM (77 aa)) is disordered. Residue C182 is modified to Cysteine methyl ester. C182 is lipidated: S-farnesyl cysteine. The propeptide at 183 to 185 (IIM) is removed in mature form.

This sequence belongs to the HIPP family.

In terms of biological role, probable heavy-metal-binding protein. The sequence is that of Heavy metal-associated isoprenylated plant protein 11 from Arabidopsis thaliana (Mouse-ear cress).